The primary structure comprises 330 residues: Putative UV-damage endonuclease (330 aa).

This sequence belongs to the uve1/UvsE family.

It localises to the virion. In terms of biological role, endonuclease for the repair of UV-irradiated DNA. This Acanthamoeba polyphaga mimivirus (APMV) protein is Putative UV-damage endonuclease.